The chain runs to 111 residues: UPF0339 protein in ptx operon 5'region (111 aa).

Tandem repeats lie at residues 10–58 and 61–109.

The protein belongs to the UPF0339 family. Duplicated subfamily.

In Stutzerimonas stutzeri (Pseudomonas stutzeri), this protein is UPF0339 protein in ptx operon 5'region.